Consider the following 142-residue polypeptide: Large ribosomal subunit protein uL11 (142 aa).

Belongs to the universal ribosomal protein uL11 family. As to quaternary structure, part of the ribosomal stalk of the 50S ribosomal subunit. Interacts with L10 and the large rRNA to form the base of the stalk. L10 forms an elongated spine to which L12 dimers bind in a sequential fashion forming a multimeric L10(L12)X complex. One or more lysine residues are methylated.

Its function is as follows. Forms part of the ribosomal stalk which helps the ribosome interact with GTP-bound translation factors. In Glaesserella parasuis serovar 5 (strain SH0165) (Haemophilus parasuis), this protein is Large ribosomal subunit protein uL11.